Here is a 380-residue protein sequence, read N- to C-terminus: Dynactin subunit 2 (380 aa).

Residues 1-40 (MADPKFQNLPGIAYDQPDVYETPDDPETDTSDYYEEEPEN) are disordered. The segment covering 21–40 (ETPDDPETDTSDYYEEEPEN) has biased composition (acidic residues). 2 coiled-coil regions span residues 100–135 (VQKCQRLQIEMNELLNEVAALQVDRKIADEEKQSYD) and 353–377 (ETFAQNLETITNKVAKVEQRVTAIS).

It belongs to the dynactin subunit 2 family. In terms of assembly, subunit of dynactin, a multiprotein complex associated with dynein.

It is found in the cytoplasm. It localises to the cytoskeleton. The protein localises to the membrane. Modulates cytoplasmic dynein binding to an organelle, and plays a role in prometaphase chromosome alignment and spindle organization during mitosis. May play a role in synapse formation during brain development. The chain is Dynactin subunit 2 from Drosophila pseudoobscura pseudoobscura (Fruit fly).